The sequence spans 444 residues: tRNA-2-methylthio-N(6)-dimethylallyladenosine synthase (444 aa).

Residues 10–126 (SSFYIHTFGC…LAGLVAGLRE (117 aa)) enclose the MTTase N-terminal domain. The [4Fe-4S] cluster site is built by Cys-19, Cys-55, Cys-89, Cys-163, Cys-167, and Cys-170. One can recognise a Radical SAM core domain in the interval 149–379 (RAGSISAFLP…IELQNAISRE (231 aa)). In terms of domain architecture, TRAM spans 382-444 (QREIGKTVEV…TSATLSGEAV (63 aa)).

The protein belongs to the methylthiotransferase family. MiaB subfamily. In terms of assembly, monomer. [4Fe-4S] cluster serves as cofactor.

The protein resides in the cytoplasm. The enzyme catalyses N(6)-dimethylallyladenosine(37) in tRNA + (sulfur carrier)-SH + AH2 + 2 S-adenosyl-L-methionine = 2-methylsulfanyl-N(6)-dimethylallyladenosine(37) in tRNA + (sulfur carrier)-H + 5'-deoxyadenosine + L-methionine + A + S-adenosyl-L-homocysteine + 2 H(+). Its function is as follows. Catalyzes the methylthiolation of N6-(dimethylallyl)adenosine (i(6)A), leading to the formation of 2-methylthio-N6-(dimethylallyl)adenosine (ms(2)i(6)A) at position 37 in tRNAs that read codons beginning with uridine. The polypeptide is tRNA-2-methylthio-N(6)-dimethylallyladenosine synthase (Chlorobaculum tepidum (strain ATCC 49652 / DSM 12025 / NBRC 103806 / TLS) (Chlorobium tepidum)).